A 380-amino-acid polypeptide reads, in one-letter code: Deoxyguanosinetriphosphate triphosphohydrolase-like protein (380 aa).

Residues 79–196 (RLTHTLEVQQ…VDAADALAYT (118 aa)) form the HD domain.

Belongs to the dGTPase family. Type 2 subfamily.

In Deinococcus deserti (strain DSM 17065 / CIP 109153 / LMG 22923 / VCD115), this protein is Deoxyguanosinetriphosphate triphosphohydrolase-like protein.